A 210-amino-acid polypeptide reads, in one-letter code: MWEPYMPVEPGLGREENFLSLEDLLMSQEKLPCCIESGFPRLGFLDKGGDSDSIPEGSKMELPLWLAKGLYDNKRRVLSVELPKIYREGWRTVFSADANVVDLHKMGPHYYGFGSQLLNFDSPENPEIAKTILQTFVGRFRRIMDSSQNAYNEDTSGLVARLDELERSLFRAGQRGLNAFQSWERGKAAQITASNLVQNYKKRKFNEADA.

This sequence belongs to the GINS3/PSF3 family. Component of the GINS complex which is a heterotetramer of gins1/psf1, gins2/psf2, gins3/psf3 and gins4/sld5. Component of the CMG helicase complex, composed of the mcm2-7 complex, the GINS complex and cdc45.

It is found in the nucleus. The protein localises to the chromosome. In terms of biological role, required for correct functioning of the GINS complex, a complex that plays an essential role in the initiation of DNA replication, and progression of DNA replication forks. GINS complex is a core component of CDC45-MCM-GINS (CMG) helicase, the molecular machine that unwinds template DNA during replication, and around which the replisome is built. This Xenopus laevis (African clawed frog) protein is DNA replication complex GINS protein PSF3.